Here is a 21-residue protein sequence, read N- to C-terminus: Serine protease inhibitor 1 (21 aa).

A Pacifastin domain is found at 1–21 (EQQCTPGQTKKEDCNNCTSGD). A disordered region spans residues 1–21 (EQQCTPGQTKKEDCNNCTSGD).

This sequence belongs to the protease inhibitor I19 family. In terms of tissue distribution, expressed in hemolymph.

It is found in the secreted. Its function is as follows. Probable serine protease inhibitor. In Melanoplus sanguinipes (Migratory grasshopper), this protein is Serine protease inhibitor 1.